We begin with the raw amino-acid sequence, 282 residues long: MALKQVSSSKCFGGLQKVFEHDSVELKCKMKFAVYLPPKAETGKCPVLYWLSGLTCTEQNFISKSGYHQAASEHGLVVIAPDTSPRGCNIKGEEDSWDFGTGAGFYVDATEDLWKTNYRMYSYVTKELPQLVNDNFPVDPQRMSVFGHSMGGHGALICALKNPGKYKSVSAFAPLCNPVLCRWGKKAFTGYLGTDQSKWEAYDATYLVKSYPGPQLDILIDQGKEDEFLSDGQLLPDNFIAACTEKKIPVVFRLQEGYDHSYYFIATFIADHIRHHAKYLNA.

Ala-2 is subject to N-acetylalanine. Lys-4 bears the N6-succinyllysine mark. Catalysis depends on charge relay system residues Ser-149, Asp-226, and His-260.

This sequence belongs to the esterase D family. In terms of assembly, homodimer.

Its subcellular location is the cytoplasm. It localises to the cytoplasmic vesicle. It carries out the reaction S-formylglutathione + H2O = formate + glutathione + H(+). Functionally, serine hydrolase involved in the detoxification of formaldehyde. The protein is S-formylglutathione hydrolase (ESD) of Bos taurus (Bovine).